A 740-amino-acid polypeptide reads, in one-letter code: Eukaryotic translation initiation factor 3 subunit B (740 aa).

Over residues 1–10 (MAPSFDTLSE) the composition is skewed to polar residues. Residues 1-20 (MAPSFDTLSEQDLHEEEEEE) are disordered. Residues 40-126 (TFVVIDGLPV…HTLLVNKLMD (87 aa)) form the RRM domain. WD repeat units lie at residues 193–230 (AHWT…KQKQ), 232–289 (PHPF…RSFV), 302–343 (EPKK…LLGK), 455–496 (SLKD…SFFA), 513–556 (IEKK…EKPE), and 571–609 (IEHY…HTFA). Residues 695–721 (DAYGLPEEADDPKLAKDAAATTQEQGE) form a disordered region.

Belongs to the eIF-3 subunit B family. Component of the eukaryotic translation initiation factor 3 (eIF-3) complex.

The protein resides in the cytoplasm. RNA-binding component of the eukaryotic translation initiation factor 3 (eIF-3) complex, which is involved in protein synthesis of a specialized repertoire of mRNAs and, together with other initiation factors, stimulates binding of mRNA and methionyl-tRNAi to the 40S ribosome. The eIF-3 complex specifically targets and initiates translation of a subset of mRNAs involved in cell proliferation. This chain is Eukaryotic translation initiation factor 3 subunit B (prt1), found in Neosartorya fischeri (strain ATCC 1020 / DSM 3700 / CBS 544.65 / FGSC A1164 / JCM 1740 / NRRL 181 / WB 181) (Aspergillus fischerianus).